The chain runs to 109 residues: Nucleoid-associated protein NT01EI_1109 (109 aa).

Residues 89-109 form a disordered region; it reads KERMASVSSGMQLPPGFKMPF.

It belongs to the YbaB/EbfC family. Homodimer.

Its subcellular location is the cytoplasm. It localises to the nucleoid. Binds to DNA and alters its conformation. May be involved in regulation of gene expression, nucleoid organization and DNA protection. The chain is Nucleoid-associated protein NT01EI_1109 from Edwardsiella ictaluri (strain 93-146).